Here is a 515-residue protein sequence, read N- to C-terminus: Putative BTB/POZ domain-containing protein At3g49970 (515 aa).

Residues 1–63 enclose the BTB domain; it reads MLEKLSFLLH…CYDISFEINT (63 aa). Positions 149–409 constitute an NPH3 domain; sequence DWWADDLAVL…NSDSPAPATA (261 aa). Tyrosine 350 carries the phosphotyrosine modification. The disordered stretch occupies residues 395 to 417; that stretch reads QENLSNSDSPAPATAEKTLSPPE. Residues 418–452 are a coiled coil; sequence LSSYKNELSKLNRENQYLKLELLKVKMKFKELEKE. The tract at residues 494–515 is disordered; that stretch reads INPFGLKQGQTKQPKSRRHSIS.

Belongs to the NPH3 family.

It participates in protein modification; protein ubiquitination. May act as a substrate-specific adapter of an E3 ubiquitin-protein ligase complex (CUL3-RBX1-BTB) which mediates the ubiquitination and subsequent proteasomal degradation of target proteins. The chain is Putative BTB/POZ domain-containing protein At3g49970 from Arabidopsis thaliana (Mouse-ear cress).